Here is a 246-residue protein sequence, read N- to C-terminus: MPTVSMRDMLQAGVHFGHQTRYWNPKMGKYIFGARNKIHIINLEHTVPAFNEALAIVKQLGSQKKKVLFVGTKRAAQKSIKEQAERSNMPFVSHRWLGGMLTNYKTIRASIRRYRELETQSQDGTFEKLTKKEALVRTRIMEKLEKSIGGIKDMGGLPDALFIIDVEHERIAIQEANKLGIPVIGVVDTNSDPAGVDYVIPGNDDAIRAIKLYATAVADACIEGAADSASVPNKDEFVEEKAADAE.

It belongs to the universal ribosomal protein uS2 family.

This Saccharophagus degradans (strain 2-40 / ATCC 43961 / DSM 17024) protein is Small ribosomal subunit protein uS2.